The chain runs to 128 residues: uncharacterized protein (128 aa).

Transmembrane regions (helical) follow at residues isoleucine 30–serine 50, valine 65–glutamine 85, and tryptophan 93–valine 113.

It localises to the cell membrane. This is an uncharacterized protein from Rickettsia prowazekii (strain Madrid E).